The following is a 207-amino-acid chain: Small ribosomal subunit protein uS4 (207 aa).

The disordered stretch occupies residues 33–54; that stretch reads KLDSKPGQHGRTSGARTSDYGN. The segment covering 42 to 53 has biased composition (polar residues); sequence GRTSGARTSDYG. Positions 97–160 constitute an S4 RNA-binding domain; sequence SRLDNVVYRM…KKQVRIAEAL (64 aa).

The protein belongs to the universal ribosomal protein uS4 family. As to quaternary structure, part of the 30S ribosomal subunit. Contacts protein S5. The interaction surface between S4 and S5 is involved in control of translational fidelity.

Its function is as follows. One of the primary rRNA binding proteins, it binds directly to 16S rRNA where it nucleates assembly of the body of the 30S subunit. Functionally, with S5 and S12 plays an important role in translational accuracy. The protein is Small ribosomal subunit protein uS4 of Cupriavidus pinatubonensis (strain JMP 134 / LMG 1197) (Cupriavidus necator (strain JMP 134)).